A 566-amino-acid chain; its full sequence is Beta,beta-carotene 15,15'-dioxygenase (566 aa).

Fe cation-binding residues include histidine 172, histidine 237, histidine 308, and histidine 514. Residues 530-566 (PAETQEVENSDHPTDPTAPELSHSENDFTAGHGGSSL) are disordered.

Belongs to the carotenoid oxygenase family. Fe(2+) is required as a cofactor. Expressed in liver, kidney, small intestine and testis.

Its subcellular location is the cytoplasm. It is found in the cytosol. It catalyses the reaction all-trans-beta-carotene + O2 = 2 all-trans-retinal. It participates in cofactor metabolism; retinol metabolism. Its function is as follows. Symmetrically cleaves beta-carotene into two molecules of retinal using a dioxygenase mechanism. This Mus musculus (Mouse) protein is Beta,beta-carotene 15,15'-dioxygenase.